Consider the following 1811-residue polypeptide: ADP-ribosylation factor guanine nucleotide-exchange factor sec71 (1811 aa).

Disordered regions lie at residues 1-108 (MTDL…TSEA) and 316-336 (INMNKSSSNGTPDRANSPIPS). Basic and acidic residues-rich tracts occupy residues 33-49 (STIKSRVSDEIDEHDSI), 57-73 (KSIEINDKNLEAEKDIE), and 80-91 (PPEDDLDSRSIE). The residue at position 40 (serine 40) is a Phosphoserine. Polar residues-rich tracts occupy residues 92–108 (SEQTGTLSKQTTSTSEA) and 316–326 (INMNKSSSNGT). The residue at position 326 (threonine 326) is a Phosphothreonine. Phosphoserine occurs at positions 332 and 353. Positions 533-537 (NYDCI) match the HUS box motif. Basic and acidic residues predominate over residues 643–663 (TAKDDETESTSKGEEPQKSKS). The segment at 643–688 (TAKDDETESTSKGEEPQKSKSEPPSAGINSTSMDNLESSGQALATD) is disordered. Over residues 669 to 688 (GINSTSMDNLESSGQALATD) the composition is skewed to polar residues. In terms of domain architecture, SEC7 spans 692–880 (QFENLKHRKK…TEVYEEIQKN (189 aa)). Residue serine 741 is modified to Phosphoserine. The residue at position 742 (threonine 742) is a Phosphothreonine. Aspartate 812 is a Mg(2+) binding site. Residues 889–1103 (DPTSNFPEIP…TTKPLRKSLD (215 aa)) form an HDS1 domain region.

It localises to the cytoplasm. The protein resides in the golgi apparatus. Its subcellular location is the trans-Golgi network. The protein localises to the cytoplasmic vesicle. It is found in the COPI-coated vesicle membrane. It localises to the COPII-coated vesicle membrane. Functionally, guanine exchange factor that acts as an activator of arf1 at the trans-Golgi net-work and is thus involved in vesicular budding and traffic between compartments of the Golgi apparatus. Activation of Arf (ADP-ribosylation factor) GTPases is essential for vesicle formation via recruitment of cargo adapters and coat proteins necessary for Golgi trafficking. Involved in tunicamycin-induced ER stress response and subsequent apoptosis. The polypeptide is ADP-ribosylation factor guanine nucleotide-exchange factor sec71 (Schizosaccharomyces pombe (strain 972 / ATCC 24843) (Fission yeast)).